A 644-amino-acid polypeptide reads, in one-letter code: Exoribonuclease 2 (644 aa).

An RNB domain is found at 189–516 (REDLTALDFV…NHRLLKAIIK (328 aa)). The region spanning 561 to 643 (DSRFAAEIID…ETRSVIARPV (83 aa)) is the S1 motif domain.

It belongs to the RNR ribonuclease family. RNase II subfamily.

The protein localises to the cytoplasm. It carries out the reaction Exonucleolytic cleavage in the 3'- to 5'-direction to yield nucleoside 5'-phosphates.. Functionally, involved in mRNA degradation. Hydrolyzes single-stranded polyribonucleotides processively in the 3' to 5' direction. The protein is Exoribonuclease 2 of Cronobacter sakazakii (strain ATCC BAA-894) (Enterobacter sakazakii).